Consider the following 25-residue polypeptide: Ocellatin-F1 (25 aa).

A Leucine amide modification is found at leucine 25.

Belongs to the frog skin active peptide (FSAP) family. Ocellatin subfamily. In terms of tissue distribution, expressed by the skin glands.

It is found in the secreted. Antibacterial peptide that inhibits reference strains of both Gram-negative bacteria (E.coli, P.aeruginosa, E.cloacae, K.pneumoniae, and A.actinomycetemcomitans) and Gram-positive bacteria (S.aureus) with relatively low potencies (MIC=25-400 uM). Shows antifungal activity against C.lusitaniae (MIC=50.25 uM), but no activity against C.albicans. In the presence of an alkaloid (bufotenine), inhibits cellular infection by the rabies virus. The peptide shows very low hemolytic activity against rabbit erythrocytes. The low amphipathicity of alpha-helices demonstrated by wheel projection as well as the low cationicity may explain the low antibacterial and hemolytic potencies. The protein is Ocellatin-F1 of Leptodactylus labyrinthicus (Labyrinth frog).